Reading from the N-terminus, the 394-residue chain is MSKEKFERTKPHVNVGTIGHVDHGKTTLTAAITTVLAKHYGGAARAFDQIDNAPEEKARGITINTSHVEYDTPTRHYAHVDCPGHADYVKNMITGAAQMDGAILVVAATDGPMPQTREHILLGRQVGVPYIIVFLNKCDMVDDEELLELVEMEVRELLSQYDFPGDDTPIVRGSALQALNGVAEWEEKILELAGHLDTYIPEPERAIDQPFLLPIEDVFSISGRGTVVTGRVERGIIRTGDEVEIVGIKDTAKTTVTGVEMFRKLLDEGRAGENIGALLRGTKREEIERGQVLAKPGSITPHTDFESEVYVLSKDEGGRHTPFFKGYRPQFYFRTTDVTGTIELPEGVEMVMPGDNIKMTVSLIHPIAMDQGLRFAIREGGRTVGAGVVAKIIK.

A tr-type G domain is found at 10–204 (KPHVNVGTIG…HLDTYIPEPE (195 aa)). Positions 19-26 (GHVDHGKT) are G1. 19-26 (GHVDHGKT) lines the GTP pocket. Thr26 contacts Mg(2+). The G2 stretch occupies residues 60-64 (GITIN). The interval 81–84 (DCPG) is G3. GTP is bound by residues 81-85 (DCPGH) and 136-139 (NKCD). The segment at 136–139 (NKCD) is G4. Residues 174-176 (SAL) form a G5 region.

The protein belongs to the TRAFAC class translation factor GTPase superfamily. Classic translation factor GTPase family. EF-Tu/EF-1A subfamily. As to quaternary structure, monomer.

It localises to the cytoplasm. The enzyme catalyses GTP + H2O = GDP + phosphate + H(+). Its function is as follows. GTP hydrolase that promotes the GTP-dependent binding of aminoacyl-tRNA to the A-site of ribosomes during protein biosynthesis. The chain is Elongation factor Tu 1 from Haemophilus influenzae (strain 86-028NP).